The chain runs to 475 residues: MPSEIITLQLGQCGNQIGFEFWKRLCLEHGISPSGVLEDFANDGLDRKDVFFYQADDDHYIPRAVLLDLEPRVINTIMGSVYSKLYNPENVYLSKHGGGAGNNWASGYSQGEKLQEEVFDIIDREADGSDSLEGFILCHSIAGGTGSGMGSFIMERLADRYPKKLIQTFSVFPNQDEISDVVVQPYNSMLTLKRLTTAADSVVVLDNTALNRIACDRLHIQNPSFSQINNLVSTIMSVSTTTLRYPSYMNNNLIGLTAPLIPTPQLHFLMTGYTPLTSDSDIHTQQLVNVRKTTVLDVMRRLLQPKNMMVSTGPDKSNHHCYISILNIIQGEVDPTQVHKSLQRIRDRKMAQFIPWGPTSIQVALSRSSPYVQSNHRVSGLMLANHTSICSLFERALNQYDKLRKRGAFLDQFRREDIFKDDLNELDESRETVDCLVQEYEAATREDYMQFSVKRGNGPVDSKSEDSRSVTSAGS.

142–148 is a binding site for GTP; the sequence is AGGTGSG. The segment at 453–475 is disordered; it reads VKRGNGPVDSKSEDSRSVTSAGS.

Belongs to the tubulin family. In terms of assembly, interacts with Ote.

The protein localises to the cytoplasm. It localises to the cytoskeleton. The protein resides in the microtubule organizing center. It is found in the centrosome. Its subcellular location is the perinuclear region. Its function is as follows. Tubulin is the major constituent of microtubules. The gamma chain is found at microtubule organizing centers (MTOC) such as the spindle poles or the centrosome, suggesting that it is involved in the minus-end nucleation of microtubule assembly. This is Tubulin gamma-1 chain (gammaTub23C) from Drosophila melanogaster (Fruit fly).